Reading from the N-terminus, the 409-residue chain is O-glucosyltransferase rumi (409 aa).

The signal sequence occupies residues 1–20 (MLINVVLIILLVGLNGKASG). Intrachain disulfides connect C62-C73, C71-C376, C118-C124, and C280-C303. Residue D149 is the Proton donor/acceptor of the active site. Residues 190–195 (ATKLHP) are interaction with the consensus sequence C-X-S-X-[PA]-C in peptide substrates. Residues 227-231 (RGSRT), R235, 274-276 (VSF), and 292-296 (AASFR) each bind UDP-alpha-D-glucose. The short motif at 406 to 409 (KDEL) is the Prevents secretion from ER element.

It belongs to the glycosyltransferase 90 family.

Its subcellular location is the endoplasmic reticulum lumen. It participates in protein modification; protein glycosylation. In terms of biological role, protein O-glucosyltransferase. Catalyzes the reaction that attaches glucose through an O-glycosidic linkage to a conserved serine residue found in the consensus sequence C-X-S-X-[PA]-C in epidermal growth factor-like repeats. Regulates Notch signaling by glucosylating Notch in the ER, glucosylation is required for the correct folding and cleavage of Notch. The polypeptide is O-glucosyltransferase rumi (Drosophila pseudoobscura pseudoobscura (Fruit fly)).